Reading from the N-terminus, the 691-residue chain is Methionine--tRNA ligase (691 aa).

The 'HIGH' region signature appears at 12–22; sequence PYANGSFHIGH. Zn(2+) is bound by residues Cys143, Cys146, Cys156, and Cys159. A 'KMSKS' region motif is present at residues 341–345; it reads KMSKS. Lys344 provides a ligand contact to ATP. Residues 585–691 enclose the tRNA-binding domain; the sequence is DFVKVDLRIA…PGAQPGMRIH (107 aa).

This sequence belongs to the class-I aminoacyl-tRNA synthetase family. MetG type 1 subfamily. In terms of assembly, homodimer. The cofactor is Zn(2+).

The protein localises to the cytoplasm. The enzyme catalyses tRNA(Met) + L-methionine + ATP = L-methionyl-tRNA(Met) + AMP + diphosphate. Its function is as follows. Is required not only for elongation of protein synthesis but also for the initiation of all mRNA translation through initiator tRNA(fMet) aminoacylation. The sequence is that of Methionine--tRNA ligase from Bordetella avium (strain 197N).